A 931-amino-acid polypeptide reads, in one-letter code: Short transient receptor potential channel 6 (931 aa).

A disordered region spans residues 1-24; the sequence is MNQSPAAFGPRRGGSPAVVAGAGA. Topologically, residues 1–406 are cytoplasmic; the sequence is MNQSPAAFGP…GLRQQTMAVK (406 aa). Residues 13–24 are compositionally biased toward low complexity; sequence GGSPAVVAGAGA. ANK repeat units follow at residues 131 to 160, 162 to 188, and 217 to 246; these read MGQNALQLAVANEHLEITELLLKKENLSRV, DALLLAISKGYVRIVEAILSHPAFAEG, and HDVTPIILAAHCQEYEIVHTLLRKGARIER. A helical transmembrane segment spans residues 407–427; it reads FLVVLAVAVGLPFLALVYWFA. Topologically, residues 428-438 are extracellular; the sequence is PCSKMGKIMRG. A helical membrane pass occupies residues 439-459; that stretch reads PFMKFVAHAASFTIFLGLLVM. Residues 460-487 are Cytoplasmic-facing; sequence NAADRFEGTKILPNETSTDHAKQLFRMK. Residues 488-508 traverse the membrane as a helical segment; that stretch reads TSCFSWMEMLIISWVIGMIWA. Topologically, residues 509-521 are extracellular; sequence ECKEIWTQGPKEY. The chain crosses the membrane as a helical span at residues 522 to 542; sequence LFELWNMLDFGMLAIFAASFI. The Cytoplasmic segment spans residues 543 to 592; sequence ARFMAFWHASKAQSIIDANDTLKDLTKVTLGDNVKYYNLARIKWDPSDPQ. The chain crosses the membrane as a helical span at residues 593–613; the sequence is IISEGLYAIAVVLSFSRIAYI. At 614-636 the chain is on the extracellular side; sequence LPANESFGPLQISLGRTVKDIFK. Asparagine 617 is a glycosylation site (N-linked (GlcNAc...) asparagine). Residues 618–647 form an ANK 4 repeat; sequence ESFGPLQISLGRTVKDIFKFMVIFIMVFVA. A helical transmembrane segment spans residues 637-657; that stretch reads FMVIFIMVFVAFMIGMFNLYS. Over 658–674 the chain is Cytoplasmic; the sequence is YYIGAKQNEAFTTVEES. Residues 675 to 695 form a helical membrane-spanning segment; that stretch reads FKTLFWAIFGLSEVKSVVINY. Residues 696–706 are Extracellular-facing; sequence NHKFIENIGYV. The helical transmembrane segment at 707-727 threads the bilayer; it reads LYGVYNVTMVIVLLNMLIAMI. Residues 728 to 931 lie on the Cytoplasmic side of the membrane; sequence NSSFQEIEDD…MEPNQEESNR (204 aa). Serine 815 carries the phosphoserine modification.

Belongs to the transient receptor (TC 1.A.4) family. STrpC subfamily. TRPC6 sub-subfamily. In terms of assembly, homodimer; forms channel complex. Interacts with MX1 and RNF24. Phosphorylated by FYN, leading to an increase of TRPC6 channel activity.

It is found in the cell membrane. The enzyme catalyses Ca(2+)(in) = Ca(2+)(out). In terms of biological role, thought to form a receptor-activated non-selective calcium permeant cation channel. Probably is operated by a phosphatidylinositol second messenger system activated by receptor tyrosine kinases or G-protein coupled receptors. Activated by diacylglycerol (DAG) in a membrane-delimited fashion, independently of protein kinase C. Seems not to be activated by intracellular calcium store depletion. The polypeptide is Short transient receptor potential channel 6 (Bos taurus (Bovine)).